Reading from the N-terminus, the 657-residue chain is uncharacterized protein (657 aa).

A signal peptide spans 1-26 (MFGKGLVKKSLLFFSGVSTMAVFLVS). Residue C27 is the site of N-palmitoyl cysteine attachment. Residue C27 is the site of S-diacylglycerol cysteine attachment. 3 disordered regions span residues 291-316 (ISPK…FSST), 468-496 (RLSS…DGII), and 516-563 (KSMT…KETN). The segment covering 294–304 (KQGSDNNSNLS) has biased composition (polar residues). A compositionally biased stretch (basic and acidic residues) spans 469–495 (LSSDDTNTKKALKEVSTHKNGSDKDGI). A compositionally biased stretch (polar residues) spans 516–525 (KSMTDNNSGT). A compositionally biased stretch (basic and acidic residues) spans 526–545 (EQKKNLSEVDTKKKEKESKG). Over residues 546 to 559 (KTQSNGQDSGQQNG) the composition is skewed to low complexity.

To T.pallidum TmpC.

The protein localises to the cell membrane. This is an uncharacterized protein from Mycoplasma pneumoniae (strain ATCC 29342 / M129 / Subtype 1) (Mycoplasmoides pneumoniae).